Here is a 331-residue protein sequence, read N- to C-terminus: Adenosine deaminase (331 aa).

The Zn(2+) site is built by H12 and H14. Residues H14, D16, and G170 each coordinate substrate. H197 contacts Zn(2+). The active-site Proton donor is E200. D278 contributes to the Zn(2+) binding site. D279 provides a ligand contact to substrate.

Belongs to the metallo-dependent hydrolases superfamily. Adenosine and AMP deaminases family. Adenosine deaminase subfamily. The cofactor is Zn(2+).

The enzyme catalyses adenosine + H2O + H(+) = inosine + NH4(+). It carries out the reaction 2'-deoxyadenosine + H2O + H(+) = 2'-deoxyinosine + NH4(+). Its function is as follows. Catalyzes the hydrolytic deamination of adenosine and 2-deoxyadenosine. The sequence is that of Adenosine deaminase from Shewanella sp. (strain MR-4).